Consider the following 284-residue polypeptide: NAD kinase (284 aa).

Residue D70 is the Proton acceptor of the active site. NAD(+) contacts are provided by residues 70–71 (DG), 139–140 (NE), K167, D169, L177, 180–185 (TAYNLS), and Q236.

Belongs to the NAD kinase family. A divalent metal cation serves as cofactor.

It is found in the cytoplasm. The catalysed reaction is NAD(+) + ATP = ADP + NADP(+) + H(+). Its function is as follows. Involved in the regulation of the intracellular balance of NAD and NADP, and is a key enzyme in the biosynthesis of NADP. Catalyzes specifically the phosphorylation on 2'-hydroxyl of the adenosine moiety of NAD to yield NADP. The protein is NAD kinase of Helicobacter pylori (strain Shi470).